The chain runs to 393 residues: S-adenosylmethionine synthase (393 aa).

Histidine 17 is an ATP binding site. Residue aspartate 19 coordinates Mg(2+). Glutamate 45 lines the K(+) pocket. L-methionine is bound by residues glutamate 58 and glutamine 106. The flexible loop stretch occupies residues glutamine 106 to alanine 116. ATP is bound by residues aspartate 171–lysine 173, lysine 237–phenylalanine 238, aspartate 246, arginine 252–lysine 253, alanine 269, and lysine 273. Aspartate 246 is a binding site for L-methionine. L-methionine is bound at residue lysine 277.

Belongs to the AdoMet synthase family. Homotetramer; dimer of dimers. It depends on Mg(2+) as a cofactor. Requires K(+) as cofactor.

The protein localises to the cytoplasm. The enzyme catalyses L-methionine + ATP + H2O = S-adenosyl-L-methionine + phosphate + diphosphate. The protein operates within amino-acid biosynthesis; S-adenosyl-L-methionine biosynthesis; S-adenosyl-L-methionine from L-methionine: step 1/1. In terms of biological role, catalyzes the formation of S-adenosylmethionine (AdoMet) from methionine and ATP. The overall synthetic reaction is composed of two sequential steps, AdoMet formation and the subsequent tripolyphosphate hydrolysis which occurs prior to release of AdoMet from the enzyme. The protein is S-adenosylmethionine synthase of Jannaschia sp. (strain CCS1).